The primary structure comprises 354 residues: Isopentenyl-diphosphate delta-isomerase (354 aa).

Residue 6 to 7 (RK) coordinates substrate. FMN-binding positions include 63–65 (AMT), serine 93, and asparagine 122. 93–95 (SQR) contributes to the substrate binding site. Substrate is bound at residue glutamine 160. Glutamate 161 lines the Mg(2+) pocket. FMN is bound by residues lysine 192, threonine 221, 273 to 275 (GIR), and 294 to 295 (SQ).

This sequence belongs to the IPP isomerase type 2 family. As to quaternary structure, homooctamer. Dimer of tetramers. FMN serves as cofactor. The cofactor is NADPH. Requires Mg(2+) as cofactor.

Its subcellular location is the cytoplasm. The catalysed reaction is isopentenyl diphosphate = dimethylallyl diphosphate. Functionally, involved in the biosynthesis of isoprenoids. Catalyzes the 1,3-allylic rearrangement of the homoallylic substrate isopentenyl (IPP) to its allylic isomer, dimethylallyl diphosphate (DMAPP). This Pyrobaculum islandicum (strain DSM 4184 / JCM 9189 / GEO3) protein is Isopentenyl-diphosphate delta-isomerase.